The sequence spans 408 residues: Arginine biosynthesis bifunctional protein ArgJ (408 aa).

Thr-162, Lys-188, Thr-199, Glu-280, Asn-403, and Ser-408 together coordinate substrate. Residue Thr-199 is the Nucleophile of the active site.

The protein belongs to the ArgJ family. As to quaternary structure, heterotetramer of two alpha and two beta chains.

The protein resides in the cytoplasm. The enzyme catalyses N(2)-acetyl-L-ornithine + L-glutamate = N-acetyl-L-glutamate + L-ornithine. The catalysed reaction is L-glutamate + acetyl-CoA = N-acetyl-L-glutamate + CoA + H(+). Its pathway is amino-acid biosynthesis; L-arginine biosynthesis; L-ornithine and N-acetyl-L-glutamate from L-glutamate and N(2)-acetyl-L-ornithine (cyclic): step 1/1. It participates in amino-acid biosynthesis; L-arginine biosynthesis; N(2)-acetyl-L-ornithine from L-glutamate: step 1/4. In terms of biological role, catalyzes two activities which are involved in the cyclic version of arginine biosynthesis: the synthesis of N-acetylglutamate from glutamate and acetyl-CoA as the acetyl donor, and of ornithine by transacetylation between N(2)-acetylornithine and glutamate. In Ruegeria pomeroyi (strain ATCC 700808 / DSM 15171 / DSS-3) (Silicibacter pomeroyi), this protein is Arginine biosynthesis bifunctional protein ArgJ.